We begin with the raw amino-acid sequence, 397 residues long: Tryptophan synthase beta chain (397 aa).

Residue Lys-86 is modified to N6-(pyridoxal phosphate)lysine.

The protein belongs to the TrpB family. In terms of assembly, tetramer of two alpha and two beta chains. It depends on pyridoxal 5'-phosphate as a cofactor.

The enzyme catalyses (1S,2R)-1-C-(indol-3-yl)glycerol 3-phosphate + L-serine = D-glyceraldehyde 3-phosphate + L-tryptophan + H2O. Its pathway is amino-acid biosynthesis; L-tryptophan biosynthesis; L-tryptophan from chorismate: step 5/5. In terms of biological role, the beta subunit is responsible for the synthesis of L-tryptophan from indole and L-serine. The polypeptide is Tryptophan synthase beta chain (trpB) (Buchnera aphidicola subsp. Diuraphis noxia).